The primary structure comprises 607 residues: Inactive metallocarboxypeptidase ECM14 (607 aa).

The N-terminal stretch at 1–21 (MRLFTHGQVLALLAFVNTISA) is a signal peptide. Residues 22–174 (IPSFSTNSYP…QTIYESYPSP (153 aa)) constitute a propeptide that is removed on maturation. The 321-residue stretch at 202–522 (NYQPLSVIVP…NAVMMLGRFL (321 aa)) folds into the Peptidase M14 domain. Residues His-264 and Glu-267 each contribute to the Zn(2+) site. Substrate is bound by residues 264-267 (HARE), Arg-322, and 339-340 (DR). The cysteines at positions 333 and 356 are disulfide-linked. Residue Asn-349 is glycosylated (N-linked (GlcNAc...) asparagine). Position 396 (His-396) interacts with Zn(2+). Residue 397-398 (SY) participates in substrate binding. Residues 539 to 607 (QRPNKDDKPI…GWGFRRLRKR (69 aa)) form a disordered region. Over residues 550–571 (NDDDDDDNDDDDDDDDDADTND) the composition is skewed to acidic residues. Over residues 573–590 (GIGRKDDSWVPDEYKGDN) the composition is skewed to basic and acidic residues.

Belongs to the peptidase M14 family. Requires Zn(2+) as cofactor.

It localises to the vacuole. It is found in the secreted. Inactive carboxypeptidase that may play a role in cell wall organization and biogenesis. This Ajellomyces capsulatus (strain NAm1 / WU24) (Darling's disease fungus) protein is Inactive metallocarboxypeptidase ECM14 (ECM14).